Consider the following 64-residue polypeptide: Large ribosomal subunit protein uL29 (64 aa).

Belongs to the universal ribosomal protein uL29 family.

The polypeptide is Large ribosomal subunit protein uL29 (Thiobacillus denitrificans (strain ATCC 25259 / T1)).